The following is a 1400-amino-acid chain: DNA-directed RNA polymerase subunit beta' (1400 aa).

Zn(2+) contacts are provided by cysteine 71, cysteine 73, cysteine 86, and cysteine 89. Mg(2+) is bound by residues aspartate 462, aspartate 464, and aspartate 466. Residues cysteine 811, cysteine 885, cysteine 892, and cysteine 895 each coordinate Zn(2+).

This sequence belongs to the RNA polymerase beta' chain family. The RNAP catalytic core consists of 2 alpha, 1 beta, 1 beta' and 1 omega subunit. When a sigma factor is associated with the core the holoenzyme is formed, which can initiate transcription. Mg(2+) serves as cofactor. Zn(2+) is required as a cofactor.

It catalyses the reaction RNA(n) + a ribonucleoside 5'-triphosphate = RNA(n+1) + diphosphate. Functionally, DNA-dependent RNA polymerase catalyzes the transcription of DNA into RNA using the four ribonucleoside triphosphates as substrates. The polypeptide is DNA-directed RNA polymerase subunit beta' (Brucella canis (strain ATCC 23365 / NCTC 10854 / RM-666)).